Reading from the N-terminus, the 386-residue chain is MKDCSNGCSAPFAGERGSEEVAETFRAKDLIITPATVLKEKPDPDSLVFGATFTDHMLTVEWSSASGWEKPHIKPFGNLPIHPAASVLHYAVELFEGLKAFRGVDNKIRLFRPDLNMDRMCRSAVRTTLPMFDKEELLKCILQLLQIDQEWVPYSTSASLYIRPTFIGTEPSLGVKKPSKALLFVILSPVGPYFSSGSFTPVSLWANPKYIRAWKGGTGDCKMGGNYGASLLAQCEAVENGCQQVLWLYGKDNQITEVGTMNLFLYWINEDGEEELATPPLDGIILPGVTRQSILELAQQWGEFKVCERHLTMDDLATALEGNRVKEMFGSGTACVVCPVSDILYKGQMLHIPTMENGPKLASRILGKLTDIQYGRVESDWTIELP.

An N-acetylmethionine modification is found at Met1. At Lys222 the chain carries N6-(pyridoxal phosphate)lysine.

This sequence belongs to the class-IV pyridoxal-phosphate-dependent aminotransferase family. In terms of assembly, homodimer. The cofactor is pyridoxal 5'-phosphate. As to expression, expressed in brain and kidney. Overexpressed in MYC-induced brain tumors, lymphomas, as well as in a teratocarcinoma cell line.

Its subcellular location is the cytoplasm. The enzyme catalyses L-leucine + 2-oxoglutarate = 4-methyl-2-oxopentanoate + L-glutamate. The catalysed reaction is L-isoleucine + 2-oxoglutarate = (S)-3-methyl-2-oxopentanoate + L-glutamate. It catalyses the reaction L-valine + 2-oxoglutarate = 3-methyl-2-oxobutanoate + L-glutamate. Functionally, catalyzes the first reaction in the catabolism of the essential branched chain amino acids leucine, isoleucine, and valine. This chain is Branched-chain-amino-acid aminotransferase, cytosolic (Bcat1), found in Mus musculus (Mouse).